We begin with the raw amino-acid sequence, 149 residues long: UPF0260 protein Pput_1301 (149 aa).

This sequence belongs to the UPF0260 family.

The chain is UPF0260 protein Pput_1301 from Pseudomonas putida (strain ATCC 700007 / DSM 6899 / JCM 31910 / BCRC 17059 / LMG 24140 / F1).